Reading from the N-terminus, the 178-residue chain is Probable chorismate pyruvate-lyase (178 aa).

Substrate contacts are provided by arginine 73, leucine 111, and glutamate 163.

Belongs to the UbiC family.

It is found in the cytoplasm. It catalyses the reaction chorismate = 4-hydroxybenzoate + pyruvate. Its pathway is cofactor biosynthesis; ubiquinone biosynthesis. In terms of biological role, removes the pyruvyl group from chorismate, with concomitant aromatization of the ring, to provide 4-hydroxybenzoate (4HB) for the ubiquinone pathway. This is Probable chorismate pyruvate-lyase from Pseudomonas aeruginosa (strain ATCC 15692 / DSM 22644 / CIP 104116 / JCM 14847 / LMG 12228 / 1C / PRS 101 / PAO1).